The primary structure comprises 409 residues: Homoserine O-succinyltransferase (409 aa).

Residues 43 to 380 (NAIVVCHALN…PHGHDAFLLD (338 aa)) enclose the AB hydrolase-1 domain. The active-site Nucleophile is Ser-149. Arg-219 contributes to the substrate binding site. The tract at residues 244–268 (TLPAARGSLPPEGTDPTRGGPASDR) is disordered. Residues Asp-341 and His-374 contribute to the active site. Residue Asp-375 coordinates substrate.

Belongs to the AB hydrolase superfamily. MetX family. Homodimer.

The protein resides in the cytoplasm. The catalysed reaction is L-homoserine + succinyl-CoA = O-succinyl-L-homoserine + CoA. It functions in the pathway amino-acid biosynthesis; L-methionine biosynthesis via de novo pathway; O-succinyl-L-homoserine from L-homoserine: step 1/1. Its function is as follows. Transfers a succinyl group from succinyl-CoA to L-homoserine, forming succinyl-L-homoserine. The chain is Homoserine O-succinyltransferase from Comamonas testosteroni (strain DSM 14576 / KF-1) (Pseudomonas testosteroni).